The primary structure comprises 293 residues: NAD kinase (293 aa).

Asp-72 functions as the Proton acceptor in the catalytic mechanism. NAD(+) contacts are provided by residues Asp-72 to Gly-73, Asn-146 to Asp-147, Arg-157, Arg-174, Asp-176, Thr-187 to Ser-192, and Gln-247.

This sequence belongs to the NAD kinase family. Requires a divalent metal cation as cofactor.

Its subcellular location is the cytoplasm. The catalysed reaction is NAD(+) + ATP = ADP + NADP(+) + H(+). In terms of biological role, involved in the regulation of the intracellular balance of NAD and NADP, and is a key enzyme in the biosynthesis of NADP. Catalyzes specifically the phosphorylation on 2'-hydroxyl of the adenosine moiety of NAD to yield NADP. This chain is NAD kinase, found in Chromohalobacter salexigens (strain ATCC BAA-138 / DSM 3043 / CIP 106854 / NCIMB 13768 / 1H11).